The following is a 185-amino-acid chain: MAETAYTPRLRTEYDRKIKSALTEKFGYANVMQVPRLDKVVLNMGIGEAVNDRKKAETAAADLSLIAGQKAVVTYSRVAIATFKLRENQPIGCKVTLRKAKMYEFIDRLINVALPRVRDFRGLNPKSFDGRGNYSLGIKEHIIFPEIDFDKAGESWGMDITVCTTATTDDEARALLTAFNFPFRQ.

Belongs to the universal ribosomal protein uL5 family. Part of the 50S ribosomal subunit; part of the 5S rRNA/L5/L18/L25 subcomplex. Contacts the 5S rRNA and the P site tRNA. Forms a bridge to the 30S subunit in the 70S ribosome.

Functionally, this is one of the proteins that bind and probably mediate the attachment of the 5S RNA into the large ribosomal subunit, where it forms part of the central protuberance. In the 70S ribosome it contacts protein S13 of the 30S subunit (bridge B1b), connecting the 2 subunits; this bridge is implicated in subunit movement. Contacts the P site tRNA; the 5S rRNA and some of its associated proteins might help stabilize positioning of ribosome-bound tRNAs. The polypeptide is Large ribosomal subunit protein uL5 (Bradyrhizobium sp. (strain ORS 278)).